The following is a 547-amino-acid chain: Chaperonin GroEL (547 aa).

ATP-binding positions include 30–33 (TLGP), lysine 51, 87–91 (DGTTT), glycine 415, and aspartate 496. The interval 528–547 (KEEPMPMRGSGMGGMGGMDF) is disordered. The span at 537-547 (SGMGGMGGMDF) shows a compositional bias: gly residues.

This sequence belongs to the chaperonin (HSP60) family. In terms of assembly, forms a cylinder of 14 subunits composed of two heptameric rings stacked back-to-back. Interacts with the co-chaperonin GroES.

It is found in the cytoplasm. It catalyses the reaction ATP + H2O + a folded polypeptide = ADP + phosphate + an unfolded polypeptide.. In terms of biological role, together with its co-chaperonin GroES, plays an essential role in assisting protein folding. The GroEL-GroES system forms a nano-cage that allows encapsulation of the non-native substrate proteins and provides a physical environment optimized to promote and accelerate protein folding. The protein is Chaperonin GroEL of Rickettsia canadensis (strain McKiel).